Reading from the N-terminus, the 242-residue chain is Methylthioribulose-1-phosphate dehydratase (242 aa).

Over residues 1-11 the composition is skewed to basic and acidic residues; sequence MAQEIQKENND. The disordered stretch occupies residues 1 to 20; it reads MAQEIQKENNDHLVQSSDPE. Cys100 serves as a coordination point for substrate. Zn(2+)-binding residues include His117 and His119. The Proton donor/acceptor role is filled by Glu146. His202 serves as a coordination point for Zn(2+).

Belongs to the aldolase class II family. MtnB subfamily. Zn(2+) is required as a cofactor.

The protein localises to the cytoplasm. It carries out the reaction 5-(methylsulfanyl)-D-ribulose 1-phosphate = 5-methylsulfanyl-2,3-dioxopentyl phosphate + H2O. Its pathway is amino-acid biosynthesis; L-methionine biosynthesis via salvage pathway; L-methionine from S-methyl-5-thio-alpha-D-ribose 1-phosphate: step 2/6. Functionally, catalyzes the dehydration of methylthioribulose-1-phosphate (MTRu-1-P) into 2,3-diketo-5-methylthiopentyl-1-phosphate (DK-MTP-1-P). This chain is Methylthioribulose-1-phosphate dehydratase, found in Aspergillus niger (strain ATCC MYA-4892 / CBS 513.88 / FGSC A1513).